We begin with the raw amino-acid sequence, 225 residues long: NAD(P)H-quinone oxidoreductase subunit K, chloroplastic (225 aa).

[4Fe-4S] cluster-binding residues include cysteine 43, cysteine 44, cysteine 108, and cysteine 139.

The protein belongs to the complex I 20 kDa subunit family. NDH is composed of at least 16 different subunits, 5 of which are encoded in the nucleus. [4Fe-4S] cluster is required as a cofactor.

Its subcellular location is the plastid. It is found in the chloroplast thylakoid membrane. The catalysed reaction is a plastoquinone + NADH + (n+1) H(+)(in) = a plastoquinol + NAD(+) + n H(+)(out). The enzyme catalyses a plastoquinone + NADPH + (n+1) H(+)(in) = a plastoquinol + NADP(+) + n H(+)(out). Functionally, NDH shuttles electrons from NAD(P)H:plastoquinone, via FMN and iron-sulfur (Fe-S) centers, to quinones in the photosynthetic chain and possibly in a chloroplast respiratory chain. The immediate electron acceptor for the enzyme in this species is believed to be plastoquinone. Couples the redox reaction to proton translocation, and thus conserves the redox energy in a proton gradient. The polypeptide is NAD(P)H-quinone oxidoreductase subunit K, chloroplastic (Atropa belladonna (Belladonna)).